The chain runs to 230 residues: MPKHGKKYTEMSKKIDKQARYDFNEALELSLASSYVKFDETVDIAVRLGVDPRHADQMVRGTVALPNGLGKEVKVLVFAKGEKEKEALDAGADFIADEETVAKIKDGWFGFDKAIATPDMMGTVGKLGRVLGPRGLMPNAKTGTVTFDVAKAVEELKAGKIDFRVEKAGIIHVPVGKVSFGPEKLVENVKAFINMIIALKPASSKGTYLKTITVSTTMGPGVKIDPMFTK.

The protein belongs to the universal ribosomal protein uL1 family. As to quaternary structure, part of the 50S ribosomal subunit.

In terms of biological role, binds directly to 23S rRNA. The L1 stalk is quite mobile in the ribosome, and is involved in E site tRNA release. Its function is as follows. Protein L1 is also a translational repressor protein, it controls the translation of the L11 operon by binding to its mRNA. The protein is Large ribosomal subunit protein uL1 of Desulforapulum autotrophicum (strain ATCC 43914 / DSM 3382 / VKM B-1955 / HRM2) (Desulfobacterium autotrophicum).